A 347-amino-acid polypeptide reads, in one-letter code: Histidinol-phosphate aminotransferase (347 aa).

Position 209 is an N6-(pyridoxal phosphate)lysine (lysine 209).

It belongs to the class-II pyridoxal-phosphate-dependent aminotransferase family. Histidinol-phosphate aminotransferase subfamily. As to quaternary structure, homodimer. Pyridoxal 5'-phosphate is required as a cofactor.

It catalyses the reaction L-histidinol phosphate + 2-oxoglutarate = 3-(imidazol-4-yl)-2-oxopropyl phosphate + L-glutamate. It functions in the pathway amino-acid biosynthesis; L-histidine biosynthesis; L-histidine from 5-phospho-alpha-D-ribose 1-diphosphate: step 7/9. This Geotalea daltonii (strain DSM 22248 / JCM 15807 / FRC-32) (Geobacter daltonii) protein is Histidinol-phosphate aminotransferase.